The chain runs to 197 residues: Putative rho GDP-dissociation inhibitor 1 (197 aa).

Belongs to the Rho GDI family. Interacts with rac1A, rac1B, rac1C, racB, raCC and RacE.

The protein resides in the cytoplasm. Functionally, regulates the GDP/GTP exchange reaction of the Rho proteins by inhibiting the dissociation of GDP from them, and the subsequent binding of GTP to them. Regulates the Rac-dependent signaling pathways controlling cytokinesis, actin reorganization and the contractile vacuole. Required for efficient accumulation of cap at the cell cortex. This chain is Putative rho GDP-dissociation inhibitor 1 (rdiA), found in Dictyostelium discoideum (Social amoeba).